A 1276-amino-acid polypeptide reads, in one-letter code: MSNQQQQQQQQQQPRQHPQPHPHHHHHHLHHHHQQQPGQHSEFPLPEGWDIARDFDGKTYYIDHINKKTTWLDPRDRYTKPQSFEDCVGDELPVGWEEAYDSNIGRYYINHIAQSTQLEDPRQEWKSVQEQMLSDYLSAAQDQLENKREMYDVKQQRLNLAQEEYNHLNKLAASRSSLCSSSSSMSRHDPELLRADLMLARERVRQLKQELTHITNDISYTERGMNTLYSVGEKINARKNGCYDIAEVQAIREEMLKVHKSLVSGEKVREELMRSLVQIKNELSRQQINEENAELMSAASPFDRVCVASQTDLCGAGEHLNGGARFAEMAKTKLQYAEWRKHIKKLQQQLADHVERIEPGQLESDKDRILLIQEKEKLLNDLNSISLKSRSAEEKQVIQQTRHKLEEDLKEAYEATNTCIANRLRFHEEKQLLLDKLQEALKSTKLLEERLKSFSSESTFSISSGSSLGSLSTASSKSALSFTDIYIDPFAVGESPIDVVDLQRRSQRLFQQHQRLPPVHPALQQQQQTQPLASSEVSLSPRSSLSMETPPASPMKYNAVADQPQAQAKLKEEPTYANALPALPTIPAPPAYAAPPAIPLALAAVRAHPYDLDSTVLDCMMLEAKLQKLNLGSPLNLNGPLSPISEKPSLLDLPQEMLSRSSSTSNTRSVSAAVSNESVAGDSGVFEASRAHLPRKELAQVQIGLKYLKQEGVLVVSLERANNLSALWTATTDNSQVYLRAALLPNSLTSIRTKALSDFQKPVFNDTFAVPISLDKLLTKSLQVTVVSMTGQKEEIIGTVQISMAEFNPEDSTLKWYNVLSSKFIPSFESLDLPSTSAAAAAAAVAASNSNNNNSNTNNREESSDESTITSSQTSTLTRNQAPPLELQAQIAEELPEHVRHNEQQCSDDDDDDDEEEDEQQLVGTLGLTHSGCMLDAYLENMKQEYADKETNTDCAFPPEKLRSQSQLLDDRPVKRSQTFTPSAAVSKNRYNCRLNRSDSDSAMHFGVTPHTFHRGAVERRSLRFQPKATKSVTKLHHNHIPRTSLDLELDLQAQHSKLFFLNDQISKLQNLKEVLQKACDNKDPLIAAWAIENEEFQRLVARADPAKFPEERLLQKLLMKTTKEIHKLRKTKVPKGAPDLVSFKEKISFFTRKGMSVPELPIEFMHPDADAIEEEEEDDNDDEEDNVVETAIAINTALVASSNRNKNLSEHHHRSTDGALSKLAATLTPAINPAPVSAPIPVAVSVPVAAPLADEAKPEQQRYDYVVDRNYGVEV.

Positions 1–16 (MSNQQQQQQQQQQPRQ) are enriched in low complexity. The segment at 1-47 (MSNQQQQQQQQQQPRQHPQPHPHHHHHHLHHHHQQQPGQHSEFPLPE) is disordered. Positions 18–34 (PQPHPHHHHHHLHHHHQ) are enriched in basic residues. 2 WW domains span residues 43-76 (FPLP…DPRD) and 90-123 (DELP…DPRQ). Coiled coils occupy residues 137 to 219 (LSAA…NDIS), 266 to 298 (EKVR…LMSA), and 327 to 455 (AEMA…KSFS). Residues 521-554 (PALQQQQQTQPLASSEVSLSPRSSLSMETPPASP) form a disordered region. Residues 524–546 (QQQQQTQPLASSEVSLSPRSSLS) are compositionally biased toward low complexity. Positions 697–817 (ELAQVQIGLK…NPEDSTLKWY (121 aa)) constitute a C2 domain. Composition is skewed to low complexity over residues 847 to 858 (ASNSNNNNSNTN) and 866 to 878 (ESTI…STLT). Disordered stretches follow at residues 847 to 882 (ASNS…RNQA), 898 to 921 (HVRH…DEQQ), and 950 to 980 (ETNT…SQTF). The span at 906–920 (CSDDDDDDDEEEDEQ) shows a compositional bias: acidic residues.

It belongs to the WWC family. KIBRA subfamily. Forms a complex with Mer and Ex. Interacts (via domain WW 1) with Ex (via RXPPXY motif). Interacts with Mer, Sav, Hpo and Wts.

It localises to the cytoplasm. The protein resides in the apical cell membrane. Its function is as follows. Regulator of the Hippo/SWH (Sav/Wts/Hpo) signaling pathway, a signaling pathway that plays a pivotal role in organ size control and tumor suppression by restricting proliferation and promoting apoptosis. The core of this pathway is composed of a kinase cascade wherein Hippo (Hpo), in complex with its regulatory protein Salvador (Sav), phosphorylates and activates Warts (Wts) in complex with its regulatory protein Mats, which in turn phosphorylates and inactivates the Yorkie (Yki) oncoprotein. Kibra acts synergistically along with Ex and Mer to regulate the Hippo signaling pathway. The sequence is that of Protein kibra (Kibra) from Drosophila virilis (Fruit fly).